The sequence spans 483 residues: Glutamate--tRNA ligase (483 aa).

The 'HIGH' region motif lies at 9-19 (PSPTGNLHIGT). The 'KMSKS' region signature appears at 250–254 (KLSKR). Lys-253 lines the ATP pocket.

Belongs to the class-I aminoacyl-tRNA synthetase family. Glutamate--tRNA ligase type 1 subfamily. As to quaternary structure, monomer.

It localises to the cytoplasm. It catalyses the reaction tRNA(Glu) + L-glutamate + ATP = L-glutamyl-tRNA(Glu) + AMP + diphosphate. Its function is as follows. Catalyzes the attachment of glutamate to tRNA(Glu) in a two-step reaction: glutamate is first activated by ATP to form Glu-AMP and then transferred to the acceptor end of tRNA(Glu). This is Glutamate--tRNA ligase from Synechocystis sp. (strain ATCC 27184 / PCC 6803 / Kazusa).